We begin with the raw amino-acid sequence, 205 residues long: N-(5'-phosphoribosyl)anthranilate isomerase (205 aa).

This sequence belongs to the TrpF family.

The enzyme catalyses N-(5-phospho-beta-D-ribosyl)anthranilate = 1-(2-carboxyphenylamino)-1-deoxy-D-ribulose 5-phosphate. It participates in amino-acid biosynthesis; L-tryptophan biosynthesis; L-tryptophan from chorismate: step 3/5. The chain is N-(5'-phosphoribosyl)anthranilate isomerase from Acidiphilium cryptum (strain JF-5).